The sequence spans 480 residues: Cytochrome b-c1 complex subunit 1, mitochondrial (480 aa).

Residues 1-34 constitute a mitochondrion transit peptide; sequence MAASAVCRAAGAGTRVLLRTRRSPALLRSSDLRG. An N6-acetyllysine mark is found at Lys-111 and Lys-138. An N6-acetyllysine; alternate modification is found at Lys-163. The residue at position 163 (Lys-163) is an N6-succinyllysine; alternate. The residue at position 212 (Ser-212) is a Phosphoserine. Residue Lys-248 is modified to N6-acetyllysine.

This sequence belongs to the peptidase M16 family. UQCRC1/QCR1 subfamily. Component of the ubiquinol-cytochrome c oxidoreductase (cytochrome b-c1 complex, complex III, CIII), a multisubunit enzyme composed of 11 subunits. The complex is composed of 3 respiratory subunits cytochrome b, cytochrome c1 and Rieske protein UQCRFS1, 2 core protein subunits UQCRC1/QCR1 and UQCRC2/QCR2, and 6 low-molecular weight protein subunits UQCRH/QCR6, UQCRB/QCR7, UQCRQ/QCR8, UQCR10/QCR9, UQCR11/QCR10 and subunit 9, the cleavage product of Rieske protein UQCRFS1. The complex exists as an obligatory dimer and forms supercomplexes (SCs) in the inner mitochondrial membrane with NADH-ubiquinone oxidoreductase (complex I, CI) and cytochrome c oxidase (complex IV, CIV), resulting in different assemblies (supercomplex SCI(1)III(2)IV(1) and megacomplex MCI(2)III(2)IV(2)). Interacts with UQCC6. Interacts with STMP1.

It localises to the mitochondrion inner membrane. Its function is as follows. Component of the ubiquinol-cytochrome c oxidoreductase, a multisubunit transmembrane complex that is part of the mitochondrial electron transport chain which drives oxidative phosphorylation. The respiratory chain contains 3 multisubunit complexes succinate dehydrogenase (complex II, CII), ubiquinol-cytochrome c oxidoreductase (cytochrome b-c1 complex, complex III, CIII) and cytochrome c oxidase (complex IV, CIV), that cooperate to transfer electrons derived from NADH and succinate to molecular oxygen, creating an electrochemical gradient over the inner membrane that drives transmembrane transport and the ATP synthase. The cytochrome b-c1 complex catalyzes electron transfer from ubiquinol to cytochrome c, linking this redox reaction to translocation of protons across the mitochondrial inner membrane, with protons being carried across the membrane as hydrogens on the quinol. In the process called Q cycle, 2 protons are consumed from the matrix, 4 protons are released into the intermembrane space and 2 electrons are passed to cytochrome c. The 2 core subunits UQCRC1/QCR1 and UQCRC2/QCR2 are homologous to the 2 mitochondrial-processing peptidase (MPP) subunits beta-MPP and alpha-MPP respectively, and they seem to have preserved their MPP processing properties. May be involved in the in situ processing of UQCRFS1 into the mature Rieske protein and its mitochondrial targeting sequence (MTS)/subunit 9 when incorporated into complex III. Seems to play an important role in the maintenance of proper mitochondrial function in nigral dopaminergic neurons. In Bos taurus (Bovine), this protein is Cytochrome b-c1 complex subunit 1, mitochondrial (UQCRC1).